The chain runs to 366 residues: Ribosomal RNA large subunit methyltransferase M (366 aa).

S-adenosyl-L-methionine-binding positions include S188, C221 to G224, D240, D260, and D277. Catalysis depends on K306, which acts as the Proton acceptor.

The protein belongs to the class I-like SAM-binding methyltransferase superfamily. RNA methyltransferase RlmE family. RlmM subfamily. As to quaternary structure, monomer.

It is found in the cytoplasm. It carries out the reaction cytidine(2498) in 23S rRNA + S-adenosyl-L-methionine = 2'-O-methylcytidine(2498) in 23S rRNA + S-adenosyl-L-homocysteine + H(+). Its function is as follows. Catalyzes the 2'-O-methylation at nucleotide C2498 in 23S rRNA. The protein is Ribosomal RNA large subunit methyltransferase M of Salmonella gallinarum (strain 287/91 / NCTC 13346).